Here is a 427-residue protein sequence, read N- to C-terminus: Enolase (427 aa).

Residue Gln162 participates in (2R)-2-phosphoglycerate binding. The Proton donor role is filled by Glu204. Mg(2+) is bound by residues Asp241, Glu282, and Asp309. Lys334, Arg363, Ser364, and Lys385 together coordinate (2R)-2-phosphoglycerate. Lys334 serves as the catalytic Proton acceptor.

This sequence belongs to the enolase family. The cofactor is Mg(2+).

Its subcellular location is the cytoplasm. The protein resides in the secreted. The protein localises to the cell surface. The catalysed reaction is (2R)-2-phosphoglycerate = phosphoenolpyruvate + H2O. The protein operates within carbohydrate degradation; glycolysis; pyruvate from D-glyceraldehyde 3-phosphate: step 4/5. In terms of biological role, catalyzes the reversible conversion of 2-phosphoglycerate (2-PG) into phosphoenolpyruvate (PEP). It is essential for the degradation of carbohydrates via glycolysis. This is Enolase from Frankia alni (strain DSM 45986 / CECT 9034 / ACN14a).